Here is a 372-residue protein sequence, read N- to C-terminus: Prostaglandin E synthase 2 (372 aa).

The Lumenal portion of the chain corresponds to 1–54 (MAHAVRALWPHGRALAWRLGDRPALGLHAQSRAGFTGAAGGSGPAATARKGGPR). Residues 55-71 (LLGAAALALGGALGLYH) traverse the membrane as a helical segment. The Cytoplasmic segment spans residues 72-372 (TARWHLRAQD…VEKAIAEAPQ (301 aa)). Positions 87–190 (SATQLSLSSR…DIITYYPPMK (104 aa)) constitute a Glutaredoxin domain. At serine 92 the chain carries Phosphoserine. Glutathione-binding positions include valine 145 and 161 to 162 (DS). The region spanning 259 to 372 (DYIVKEGNFG…VEKAIAEAPQ (114 aa)) is the GST C-terminal domain.

Belongs to the GST superfamily. In terms of assembly, may interact with CEBPB. Interacts with EXOSC10. Homodimer. In terms of processing, synthesized as a Golgi membrane-associated protein, and the proteolytic removal of the N-terminal hydrophobic domain leads to the formation of a mature cytosolic enzyme. In terms of tissue distribution, detected in heart (at protein level). Widely expressed. Expressed in heart &gt; kidney &gt; muscle &gt; testis &gt; endometrium = ovary &gt; myometrium = spleen = lung. In endometrium, it is mainly expressed in luminal epithelial cells followed by glandular epithelial cells, but expression is also present in stromal cells at a lower level.

It localises to the microsome membrane. The protein resides in the cytoplasm. The catalysed reaction is prostaglandin H2 = prostaglandin E2. The enzyme catalyses prostaglandin H2 = (12S)-hydroxy-(5Z,8E,10E)-heptadecatrienoate + malonaldehyde. Its pathway is lipid metabolism; prostaglandin biosynthesis. Its activity is regulated as follows. Isomerase activity is increased by sulfhydril compounds. Dithiothreitol (DTT) is most effective, followed by glutathione (GSH) and 2-mercaptoethanol. Its function is as follows. Isomerase that catalyzes the conversion of PGH2 into the more stable prostaglandin E2 (PGE2) (in vitro). The biological function and the GSH-dependent property of PTGES2 is still under debate. In vivo, PTGES2 could form a complex with GSH and heme and would not participate in PGE2 synthesis but would catalyze the degradation of prostaglandin E2 H2 (PGH2) to 12(S)-hydroxy-5(Z),8(E),10(E)-heptadecatrienoic acid (HHT) and malondialdehyde (MDA). The sequence is that of Prostaglandin E synthase 2 (PTGES2) from Bos taurus (Bovine).